Reading from the N-terminus, the 316-residue chain is MDLCVTIKGVSFLLQAGLGILANALVLLAYAHIRLAEARLQPVDAILCHLALVDLLLLLTRGVPQTMTVFGMRNLLDDTGCKVVIYTYRIARALSVCITCMLSVFQAVTVAPAAGPLLSGVKARLPQLLAPTFAALWFINMAVCIAAPFFSVAPRNGTVPPFTLNLGFCHVDFHDNLSYVLNGVAVSVRDFAFVGAMLASSGFILLLLHRHRRQVRAVRRSQGSTMETRAARTVLMLVILYSVFFGIDNVIWIYMLTVAQVPPVVADMRVFFSSCYASLSPFLIISSNRKLKARMVCATSEQERQAEDGKNSSGKN.

Over 1-8 (MDLCVTIK) the chain is Extracellular. Residues 9 to 29 (GVSFLLQAGLGILANALVLLA) form a helical membrane-spanning segment. The Cytoplasmic portion of the chain corresponds to 30–39 (YAHIRLAEAR). The helical transmembrane segment at 40–60 (LQPVDAILCHLALVDLLLLLT) threads the bilayer. Topologically, residues 61-97 (RGVPQTMTVFGMRNLLDDTGCKVVIYTYRIARALSVC) are extracellular. C81 and C169 are disulfide-bonded. The chain crosses the membrane as a helical span at residues 98-118 (ITCMLSVFQAVTVAPAAGPLL). Topologically, residues 119–132 (SGVKARLPQLLAPT) are cytoplasmic. Residues 133-153 (FAALWFINMAVCIAAPFFSVA) traverse the membrane as a helical segment. At 154 to 187 (PRNGTVPPFTLNLGFCHVDFHDNLSYVLNGVAVS) the chain is on the extracellular side. Residues N156 and N176 are each glycosylated (N-linked (GlcNAc...) asparagine). Residues 188–208 (VRDFAFVGAMLASSGFILLLL) traverse the membrane as a helical segment. At 209 to 233 (HRHRRQVRAVRRSQGSTMETRAART) the chain is on the cytoplasmic side. Residues 234–254 (VLMLVILYSVFFGIDNVIWIY) form a helical membrane-spanning segment. Topologically, residues 255-264 (MLTVAQVPPV) are extracellular. The chain crosses the membrane as a helical span at residues 265–285 (VADMRVFFSSCYASLSPFLII). Residues 286–316 (SSNRKLKARMVCATSEQERQAEDGKNSSGKN) lie on the Cytoplasmic side of the membrane.

Belongs to the G-protein coupled receptor 1 family. As to expression, highly expressed in the olfactory rosette where it localizes to a subset of olfactory sensory neurons, mainly in the apical region of the neuroepithelium. Not detected in other tissues tested.

It localises to the cell membrane. Probable pheromone receptor. Shows high specificity for 4-hydroxyphenylacetic acid. Activation of the receptor stimulates intracellular calcium release. The polypeptide is Olfactory receptor class A-like protein 1 (Danio rerio (Zebrafish)).